Reading from the N-terminus, the 342-residue chain is Selenide, water dikinase (342 aa).

Residue Cys13 is part of the active site. Residues Lys16 and 44–46 (SCD) contribute to the ATP site. Residue Asp47 participates in Mg(2+) binding. ATP-binding positions include Asp64, Asp87, and 134-136 (GHS). Mg(2+) is bound at residue Asp87. Asp222 provides a ligand contact to Mg(2+).

This sequence belongs to the selenophosphate synthase 1 family. Class I subfamily. In terms of assembly, homodimer. Mg(2+) serves as cofactor.

The enzyme catalyses hydrogenselenide + ATP + H2O = selenophosphate + AMP + phosphate + 2 H(+). Synthesizes selenophosphate from selenide and ATP. The sequence is that of Selenide, water dikinase from Agathobacter rectalis (strain ATCC 33656 / DSM 3377 / JCM 17463 / KCTC 5835 / VPI 0990) (Eubacterium rectale).